A 646-amino-acid polypeptide reads, in one-letter code: Serine/threonine-protein kinase PLK3 (646 aa).

Residues 1–35 (MEPAAGFLSPRPFQRAAAAPAPPAGPGPPPSALRG) form a disordered region. Positions 10-19 (PRPFQRAAAA) are enriched in low complexity. The span at 20-31 (PAPPAGPGPPPS) shows a compositional bias: pro residues. A Protein kinase domain is found at 62 to 314 (YLKGRLLGKG…IDQILRHDFF (253 aa)). ATP is bound by residues 68-76 (LGKGGFARC) and K91. The active-site Proton acceptor is the D185. The interval 381–417 (GHQDARPEAPAASGPAPVSLVETAPEDSSPRGTLASS) is disordered. POLO box domains follow at residues 463-541 (WVSK…YMEQ) and 562-645 (LLLQ…DRSP).

The protein belongs to the protein kinase superfamily. Ser/Thr protein kinase family. CDC5/Polo subfamily. In terms of assembly, interacts (via the POLO-box domain) with CIB1; leading to inhibit PLK3 kinase activity. Interacts with GOLGB1. Post-translationally, phosphorylated in an ATM-dependent manner following DNA damage. Phosphorylated as cells enter mitosis and dephosphorylated as cells exit mitosis. As to expression, transcripts are highly detected in placenta, lung, followed by skeletal muscle, heart, pancreas, ovaries and kidney and weakly detected in liver and brain. May have a short half-live. In cells of hematopoietic origin, strongly and exclusively detected in terminally differentiated macrophages. Transcript expression appears to be down-regulated in primary lung tumor.

It is found in the cytoplasm. The protein resides in the nucleus. Its subcellular location is the nucleolus. It localises to the golgi apparatus. The protein localises to the cytoskeleton. It is found in the microtubule organizing center. The protein resides in the centrosome. The catalysed reaction is L-seryl-[protein] + ATP = O-phospho-L-seryl-[protein] + ADP + H(+). The enzyme catalyses L-threonyl-[protein] + ATP = O-phospho-L-threonyl-[protein] + ADP + H(+). In terms of biological role, serine/threonine-protein kinase involved in cell cycle regulation, response to stress and Golgi disassembly. Polo-like kinases act by binding and phosphorylating proteins that are already phosphorylated on a specific motif recognized by the POLO box domains. Phosphorylates ATF2, BCL2L1, CDC25A, CDC25C, CHEK2, HIF1A, JUN, p53/TP53, p73/TP73, PTEN, TOP2A and VRK1. Involved in cell cycle regulation: required for entry into S phase and cytokinesis. Phosphorylates BCL2L1, leading to regulate the G2 checkpoint and progression to cytokinesis during mitosis. Plays a key role in response to stress: rapidly activated upon stress stimulation, such as ionizing radiation, reactive oxygen species (ROS), hyperosmotic stress, UV irradiation and hypoxia. Involved in DNA damage response and G1/S transition checkpoint by phosphorylating CDC25A, p53/TP53 and p73/TP73. Phosphorylates p53/TP53 in response to reactive oxygen species (ROS), thereby promoting p53/TP53-mediated apoptosis. Phosphorylates CHEK2 in response to DNA damage, promoting the G2/M transition checkpoint. Phosphorylates the transcription factor p73/TP73 in response to DNA damage, leading to inhibit p73/TP73-mediated transcriptional activation and pro-apoptotic functions. Phosphorylates HIF1A and JUN is response to hypoxia. Phosphorylates ATF2 following hyperosmotic stress in corneal epithelium. Also involved in Golgi disassembly during the cell cycle: part of a MEK1/MAP2K1-dependent pathway that induces Golgi fragmentation during mitosis by mediating phosphorylation of VRK1. May participate in endomitotic cell cycle, a form of mitosis in which both karyokinesis and cytokinesis are interrupted and is a hallmark of megakaryocyte differentiation, via its interaction with CIB1. The polypeptide is Serine/threonine-protein kinase PLK3 (PLK3) (Homo sapiens (Human)).